A 445-amino-acid polypeptide reads, in one-letter code: Dolichyl-diphosphooligosaccharide--protein glycosyltransferase 48 kDa subunit (445 aa).

Positions 1-20 (MRWLPGLLLIASIGFHQSLA) are cleaved as a signal peptide. The Lumenal portion of the chain corresponds to 21-405 (DRVLVLGETA…YERFIRSAYP (385 aa)). Residues 406–426 (YYASSFSMMAGLVLFSIVYLY) traverse the membrane as a helical segment. The Cytoplasmic segment spans residues 427–445 (HKDTPVKGAKVLDSEKKKN).

Belongs to the DDOST 48 kDa subunit family. In terms of assembly, component of the oligosaccharyltransferase (OST) complex.

It is found in the endoplasmic reticulum membrane. It functions in the pathway protein modification; protein glycosylation. Its function is as follows. Subunit of the oligosaccharyl transferase (OST) complex that catalyzes the initial transfer of a defined glycan (Glc(3)Man(9)GlcNAc(2) in eukaryotes) from the lipid carrier dolichol-pyrophosphate to an asparagine residue within an Asn-X-Ser/Thr consensus motif in nascent polypeptide chains, the first step in protein N-glycosylation. N-glycosylation occurs cotranslationally and the complex associates with the Sec61 complex at the channel-forming translocon complex that mediates protein translocation across the endoplasmic reticulum (ER). All subunits are required for a maximal enzyme activity. Required for the assembly of both SST3A- and SS3B-containing OST complexes. Required for normal lifespan. The chain is Dolichyl-diphosphooligosaccharide--protein glycosyltransferase 48 kDa subunit from Caenorhabditis elegans.